Consider the following 1228-residue polypeptide: Clustered mitochondria protein homolog (1228 aa).

Residues 298–557 (PSSLPSNSID…DNNPLDVGFA (260 aa)) form the Clu domain. The TPR 1 repeat unit spans residues 486 to 519 (CYGFDEASNKVIADAEFGSSLDDFAKVFHLKKHE). A coiled-coil region spans residues 671–702 (LGRVIELAEQELEAQRALREAHLQQVEADNKE). TPR repeat units lie at residues 982 to 1015 (AESYLALSTIHSKLEKKSEAVALCRKACAIYERV) and 1108 to 1141 (AVNESRLANLYASVGEYKRSLACIESCYELFSKE).

The protein belongs to the CLU family. In terms of assembly, may associate with the eukaryotic translation initiation factor 3 (eIF-3) complex.

The protein localises to the cytoplasm. MRNA-binding protein involved in proper cytoplasmic distribution of mitochondria. This Eremothecium gossypii (strain ATCC 10895 / CBS 109.51 / FGSC 9923 / NRRL Y-1056) (Yeast) protein is Clustered mitochondria protein homolog.